We begin with the raw amino-acid sequence, 261 residues long: tRNA(His) guanylyltransferase (261 aa).

3 residues coordinate Mg(2+): D29, G30, and D76. GTP contacts are provided by residues 29-34 (DGKGFH) and 75-76 (SD).

The protein belongs to the tRNA(His) guanylyltransferase family. The cofactor is Mg(2+).

It carries out the reaction a 5'-end ribonucleotide-tRNA(His) + GTP + ATP + H2O = a 5'-end phospho-guanosine-ribonucleotide-tRNA(His) + AMP + 2 diphosphate + H(+). In terms of biological role, adds a GMP to the 5'-end of tRNA(His) after transcription and RNase P cleavage. This chain is tRNA(His) guanylyltransferase (thg1), found in Schizosaccharomyces pombe (strain 972 / ATCC 24843) (Fission yeast).